A 55-amino-acid chain; its full sequence is PI-stichotoxin-She2a (55 aa).

The BPTI/Kunitz inhibitor domain occupies 3 to 53; that stretch reads CSEPKKVGRCKGYFPRFYFDSETGKCTPFIYGGCGGNGNNFETLHQCRAIC. 3 disulfides stabilise this stretch: Cys-3/Cys-53, Cys-12/Cys-36, and Cys-28/Cys-49.

The protein localises to the secreted. Its subcellular location is the nematocyst. Functionally, active against serine, cysteine, and aspartic proteases. Can bind vertebrate trypsin and chymotrypsin. In Stichodactyla helianthus (Sun anemone), this protein is PI-stichotoxin-She2a.